The chain runs to 435 residues: Nematode resistance protein-like HSPRO2 (435 aa).

As to quaternary structure, interacts with SNF4.

It is found in the cytoplasm. Positive regulator of basal resistance. This is Nematode resistance protein-like HSPRO2 (HSPRO2) from Arabidopsis thaliana (Mouse-ear cress).